A 78-amino-acid chain; its full sequence is Acyl carrier protein (78 aa).

Positions S2–L77 constitute a Carrier domain. Position 37 is an O-(pantetheine 4'-phosphoryl)serine (S37).

The protein belongs to the acyl carrier protein (ACP) family. Post-translationally, 4'-phosphopantetheine is transferred from CoA to a specific serine of apo-ACP by AcpS. This modification is essential for activity because fatty acids are bound in thioester linkage to the sulfhydryl of the prosthetic group.

The protein localises to the cytoplasm. The protein operates within lipid metabolism; fatty acid biosynthesis. In terms of biological role, carrier of the growing fatty acid chain in fatty acid biosynthesis. The chain is Acyl carrier protein from Cellvibrio japonicus (strain Ueda107) (Pseudomonas fluorescens subsp. cellulosa).